We begin with the raw amino-acid sequence, 1076 residues long: ESX secretion system protein YueB (1076 aa).

Residues 9–29 (IKLISAVIIILLLPVLFFRFI) traverse the membrane as a helical segment. Disordered stretches follow at residues 372 to 404 (RLSLLKPKESDEKEDGEDTSDNKDDTDKEDIED) and 423 to 552 (IKDI…ETDI). The segment covering 423–439 (IKDISEGLKEPEQEKPT) has biased composition (basic and acidic residues). Polar residues-rich tracts occupy residues 449-495 (DDSP…NIET) and 503-522 (SKNVPEQDTNTENTGTSKTD). Residues 552 to 622 (ISGAKKRLNE…TKKLVDFDNN (71 aa)) are a coiled coil. Transmembrane regions (helical) follow at residues 904 to 924 (TVPPVVILVIVLISSLLIGYF), 938 to 958 (ALFGILNILVGLMISLFGLNI), 964 to 984 (DQTIKWSVFTILLLVASSAFI), 995 to 1015 (GWVASAAMILFYVAPLIDLIM), and 1040 to 1060 (TMGITVLLIITVIAVALPLII).

Belongs to the EsaA family.

It is found in the cell membrane. Its function is as follows. Required for YukE secretion. Probable component or regulator of the ESX/ESAT-6-like secretion system (BsEss). Bacteriophage SPP1 receptor. Essential for the irreversible adsorption of the bacteriophage. This Bacillus subtilis (strain 168) protein is ESX secretion system protein YueB (yueB).